We begin with the raw amino-acid sequence, 136 residues long: uncharacterized protein (136 aa).

The helical transmembrane segment at 7 to 27 threads the bilayer; sequence ANVLAILLVSLFLINGLVFLS.

The protein resides in the membrane. This is an uncharacterized protein from Mycoplasma pneumoniae (strain ATCC 29342 / M129 / Subtype 1) (Mycoplasmoides pneumoniae).